A 428-amino-acid chain; its full sequence is Sialidase-3 (428 aa).

The FRIP motif motif lies at 24 to 27; the sequence is YRIP. Arg-25 and Arg-45 together coordinate substrate. Catalysis depends on Asp-50, which acts as the Proton acceptor. The stretch at 129–140 is one BNR 1 repeat; it reads IYSQDAGCSWSE. Residues Tyr-179 and Tyr-181 each coordinate substrate. A BNR 2 repeat occupies 203–214; sequence IYSDDLGVTWHH. Residues Glu-225 and Arg-245 each coordinate substrate. One copy of the BNR 3 repeat lies at 254–265; it reads ALSTDHGEGFQR. A disordered region spans residues 294 to 318; sequence RCQDSSSKDAPTIQQSSPGSSLRLE. Residues 301–313 are compositionally biased toward polar residues; sequence KDAPTIQQSSPGS. Phosphoserine is present on Ser-313. Arg-340 provides a ligand contact to substrate. Catalysis depends on Tyr-370, which acts as the Nucleophile. Glu-387 is an active-site residue.

It belongs to the glycosyl hydrolase 33 family. In terms of assembly, interacts with CAV1; this interaction enhances NEU3 sialidase activity within caveola. Interacts with EGFR; this interaction mediates desialylation of EGFR and enhances downstream signaling. Palmitoylated; may regulate intracellular trafficking and anchorage to plasma membrane and endomembranes. As to expression, highly expressed in skeletal muscle, testis, adrenal gland and thymus, followed by pancreas, liver, heart and thymus. Weakly expressed in kidney, placenta, brain and lung.

It localises to the cell membrane. The protein resides in the membrane. The protein localises to the caveola. It is found in the early endosome membrane. Its subcellular location is the recycling endosome membrane. It localises to the lysosome membrane. It catalyses the reaction Hydrolysis of alpha-(2-&gt;3)-, alpha-(2-&gt;6)-, alpha-(2-&gt;8)- glycosidic linkages of terminal sialic acid residues in oligosaccharides, glycoproteins, glycolipids, colominic acid and synthetic substrates.. The enzyme catalyses a ganglioside GD1a + H2O = a ganglioside GM1 + N-acetylneuraminate. It carries out the reaction a ganglioside GD1a (d18:1(4E)) + H2O = a ganglioside GM1 (d18:1(4E)) + N-acetylneuraminate. The catalysed reaction is a ganglioside GD1b + H2O = a ganglioside GM1 + N-acetylneuraminate. It catalyses the reaction a ganglioside GD1b (d18:1(4E)) + H2O = a ganglioside GM1 (d18:1(4E)) + N-acetylneuraminate. The enzyme catalyses a ganglioside GD3 + H2O = a ganglioside GM3 + N-acetylneuraminate. It carries out the reaction a ganglioside GD3 (d18:1(4E)) + H2O = a ganglioside GM3 (d18:1(4E)) + N-acetylneuraminate. The catalysed reaction is a ganglioside GM3 + H2O = a beta-D-galactosyl-(1-&gt;4)-beta-D-glucosyl-(1&lt;-&gt;1)-ceramide + N-acetylneuraminate. It catalyses the reaction a ganglioside GM1 + H2O = a ganglioside GA1 + N-acetylneuraminate. The enzyme catalyses a ganglioside GM1 (d18:1(4E)) + H2O = a ganglioside GA1 (d18:1(4E)) + N-acetylneuraminate. It carries out the reaction a ganglioside GM2 (d18:1(4E)) + H2O = a ganglioside GA2 (d18:1(4E)) + N-acetylneuraminate. The catalysed reaction is a ganglioside GM3 (d18:1(4E)) + H2O = a beta-D-Gal-(1-&gt;4)-beta-D-Glc-(1&lt;-&gt;1)-Cer(d18:1(4E)) + N-acetylneuraminate. It catalyses the reaction a ganglioside GT1b + H2O = a ganglioside GD1b + N-acetylneuraminate. In terms of biological role, exo-alpha-sialidase that catalyzes the hydrolytic cleavage of the terminal sialic acid (N-acetylneuraminic acid, Neu5Ac) of a glycan moiety in the catabolism of glycolipids, glycoproteins and oligosacharides. Displays high catalytic efficiency for gangliosides including alpha-(2-&gt;3)-sialylated GD1a and GM3 and alpha-(2-&gt;8)-sialylated GD3. Plays a role in the regulation of transmembrane signaling through the modulation of ganglioside content of the lipid bilayer and by direct interaction with signaling receptors, such as EGFR. Desialylates EGFR and activates downstream signaling in proliferating cells. Contributes to clathrin-mediated endocytosis by regulating sorting of endocytosed receptors to early and recycling endosomes. This chain is Sialidase-3 (NEU3), found in Homo sapiens (Human).